A 260-amino-acid chain; its full sequence is Indole-3-glycerol phosphate synthase (260 aa).

It belongs to the TrpC family.

The enzyme catalyses 1-(2-carboxyphenylamino)-1-deoxy-D-ribulose 5-phosphate + H(+) = (1S,2R)-1-C-(indol-3-yl)glycerol 3-phosphate + CO2 + H2O. Its pathway is amino-acid biosynthesis; L-tryptophan biosynthesis; L-tryptophan from chorismate: step 4/5. This Chloroherpeton thalassium (strain ATCC 35110 / GB-78) protein is Indole-3-glycerol phosphate synthase.